Here is a 196-residue protein sequence, read N- to C-terminus: Molybdopterin synthase catalytic subunit (196 aa).

The tract at residues 1–29 is disordered; sequence MSTLPSTDPPPLPASTSSQQPAVHIPPPS. Residues 145-146, Lys161, and 168-170 contribute to the substrate site; these read HR and KRE. Residues 174–196 are disordered; the sequence is GEPPGQGEWRANRDTDPEGKSTS. Positions 183 to 196 are enriched in basic and acidic residues; it reads RANRDTDPEGKSTS.

It belongs to the MoaE family. MOCS2B subfamily. Heterotetramer; composed of 2 small (MOCS2A) and 2 large (MOCS2B) subunits.

It localises to the cytoplasm. The catalysed reaction is 2 [molybdopterin-synthase sulfur-carrier protein]-C-terminal-Gly-aminoethanethioate + cyclic pyranopterin phosphate + H2O = molybdopterin + 2 [molybdopterin-synthase sulfur-carrier protein]-C-terminal Gly-Gly + 2 H(+). The protein operates within cofactor biosynthesis; molybdopterin biosynthesis. In terms of biological role, catalytic subunit of the molybdopterin synthase complex, a complex that catalyzes the conversion of precursor Z into molybdopterin. Acts by mediating the incorporation of 2 sulfur atoms from thiocarboxylated MOCS2A into precursor Z to generate a dithiolene group. The protein is Molybdopterin synthase catalytic subunit of Coccidioides immitis (strain RS) (Valley fever fungus).